The chain runs to 517 residues: MLAYGSDPNAEDLYITMTPSVSTENDTTVWATEEPAAIVWRHPLLAIALFSICLLTVAGNCLVVIAVCTKKYLRNPTGYLIISLAIADLIVGVIVMPMNSLFEIANHTWLFGLMMCDVFHAMDILASTASIWNLCVISLDRYMAGQDPIGYRDKVSKRRILMAILSVWVLSAILSFPGIIWWRTSSPHLYEDQSQCLFTDSKMYVSFSSLVSFYIPLFLILFAYGKVYIIATRHSKGMRMGIKTVSIKKRNGKKSNTETESILSSENEPTLRIHFGRGKQSSSSLRNSRFHARESTRLLLKQVSCKSLNDRGEHNNNNTVRQPLLRGTEGCHSDSISRSSQRNFRGRNVTIGSNCSSTLLQVDQPDRMSLSSNSQMVMTSPLSTRRKLNVREKSRQMMRYVHEQRAARTLSIVVGAFILCWTPFFVFTPLTAFCESCFSNKETIFTFVTWAGHLNSMLNPLIYSRFSRDFRRAFKQILTCQRQQKVKTAFKTPLSLVFTQLISVTQMWEQPPNTSIE.

Topologically, residues 1–46 (MLAYGSDPNAEDLYITMTPSVSTENDTTVWATEEPAAIVWRHPLLA) are extracellular. Residue Asn-25 is glycosylated (N-linked (GlcNAc...) asparagine). A helical membrane pass occupies residues 47 to 67 (IALFSICLLTVAGNCLVVIAV). Over 68–77 (CTKKYLRNPT) the chain is Cytoplasmic. Residues 78–98 (GYLIISLAIADLIVGVIVMPM) traverse the membrane as a helical segment. Over 99–108 (NSLFEIANHT) the chain is Extracellular. Asn-106 is a glycosylation site (N-linked (GlcNAc...) asparagine). The chain crosses the membrane as a helical span at residues 109 to 129 (WLFGLMMCDVFHAMDILASTA). Residues 130–159 (SIWNLCVISLDRYMAGQDPIGYRDKVSKRR) lie on the Cytoplasmic side of the membrane. Residues 160-180 (ILMAILSVWVLSAILSFPGII) form a helical membrane-spanning segment. Residues 181–209 (WWRTSSPHLYEDQSQCLFTDSKMYVSFSS) lie on the Extracellular side of the membrane. The helical transmembrane segment at 210–230 (LVSFYIPLFLILFAYGKVYII) threads the bilayer. The Cytoplasmic portion of the chain corresponds to 231–409 (ATRHSKGMRM…YVHEQRAART (179 aa)). The segment at 309-339 (NDRGEHNNNNTVRQPLLRGTEGCHSDSISRS) is disordered. The chain crosses the membrane as a helical span at residues 410 to 430 (LSIVVGAFILCWTPFFVFTPL). The Extracellular portion of the chain corresponds to 431–442 (TAFCESCFSNKE). The helical transmembrane segment at 443–463 (TIFTFVTWAGHLNSMLNPLIY) threads the bilayer. At 464–517 (SRFSRDFRRAFKQILTCQRQQKVKTAFKTPLSLVFTQLISVTQMWEQPPNTSIE) the chain is on the cytoplasmic side.

Belongs to the G-protein coupled receptor 1 family. In terms of tissue distribution, expressed in pharyngeal neurons I1 and I2, neurons ASG, AVL, CAN, PQR, vulva, intestine, rectal glands and rectal epithelial glands. Also expressed in neurons in ray 8 in males.

It localises to the cell membrane. Functionally, receptor for dopamine. The activity of this receptor is mediated by G proteins which activate adenylyl cyclase. In terms of antagonist responses, would be classed with the D1-like dopamine receptor group. The chain is Dopamine receptor 4 (dop-4) from Caenorhabditis elegans.